A 353-amino-acid polypeptide reads, in one-letter code: Anthranilate phosphoribosyltransferase (353 aa).

5-phospho-alpha-D-ribose 1-diphosphate is bound by residues Gly-87, 90 to 91, Thr-95, 97 to 100, 115 to 123, and Thr-127; these read GD, NIST, and KHGNRAASS. Position 87 (Gly-87) interacts with anthranilate. Ser-99 is a Mg(2+) binding site. Residue Asn-118 coordinates anthranilate. Anthranilate is bound at residue Arg-173. Mg(2+)-binding residues include Asp-231 and Glu-232.

It belongs to the anthranilate phosphoribosyltransferase family. Homodimer. Mg(2+) serves as cofactor.

The catalysed reaction is N-(5-phospho-beta-D-ribosyl)anthranilate + diphosphate = 5-phospho-alpha-D-ribose 1-diphosphate + anthranilate. The protein operates within amino-acid biosynthesis; L-tryptophan biosynthesis; L-tryptophan from chorismate: step 2/5. Functionally, catalyzes the transfer of the phosphoribosyl group of 5-phosphorylribose-1-pyrophosphate (PRPP) to anthranilate to yield N-(5'-phosphoribosyl)-anthranilate (PRA). The polypeptide is Anthranilate phosphoribosyltransferase (Salinispora arenicola (strain CNS-205)).